Reading from the N-terminus, the 1046-residue chain is Protein jim lovell (1046 aa).

Residues 54 to 109 (TSDHAPMHSTPPTTPPTPPPLPLNMSQSASAVTEAATPENSLPATPPSEGALAVPS) are disordered. Positions 65-75 (PTTPPTPPPLP) are enriched in pro residues. A BTB domain is found at 140–205 (VDVTLVCAET…MYRGEISVPQ (66 aa)). Disordered stretches follow at residues 290–342 (LRRK…DAES), 355–501 (AERD…KLQD), 632–655 (PPFG…PGQA), 686–719 (EFGP…GMSS), 758–791 (RDMP…RSWT), 851–947 (EMLQ…APNA), and 998–1046 (DCKS…TGHD). The span at 294–303 (REQESDRDLE) shows a compositional bias: basic and acidic residues. Residues 315–324 (PRRKQARPRR) are compositionally biased toward basic residues. Polar residues predominate over residues 365 to 380 (QDNSQGEAEKISSSPA). The segment covering 383-412 (LVERAKEQKSMKEEGSDQPRSLNENHHQLE) has biased composition (basic and acidic residues). The span at 413–432 (LDDEDDDDQDHEEEEEQDIE) shows a compositional bias: acidic residues. Positions 433–443 (ELIHTTNELRR) are enriched in basic and acidic residues. Residues 445-454 (AAAAAANAAA) show a composition bias toward low complexity. Residues 636–651 (GHNGGHPGNSGPGNGC) show a composition bias toward gly residues. A compositionally biased stretch (pro residues) spans 703–714 (DGPPHPPSPLPF). The span at 768–777 (LKKKMPRPKG) shows a compositional bias: basic residues. The HTH psq-type domain occupies 781-833 (APRGGPPRSWTNTELTEALQHVWNKKMTTSQASRIFGIPYNSLLMYVRGKYGK). Basic and acidic residues predominate over residues 866 to 881 (KNEKSKERKEKEKDKN). 2 stretches are compositionally biased toward low complexity: residues 882-897 (SMSS…SQGG) and 912-925 (LGPM…LGLP).

As to expression, initially expressed at blastoderm stage, transient accumulation at dorso-lateral positions of the embryo and differences along the longitudinal axis. At later stages of embryogenesis, expression is found exclusively in neural anlagen. Expressed in 4 posterior-most ventral unpaired median interneurons (VUM) neurons, VUM interneurons and one progeny of the median neuroblast (MNB).

The protein resides in the nucleus. Its function is as follows. Has a regulatory role during midline cell development. This Drosophila melanogaster (Fruit fly) protein is Protein jim lovell (lov).